A 335-amino-acid chain; its full sequence is Probable cytosolic iron-sulfur protein assembly protein Ciao1 (335 aa).

WD repeat units follow at residues 12–51, 57–96, 101–140, 146–185, 192–231, 250–289, and 301–335; these read GHKG…WTTK, GHKR…FECN, GHEN…EFEC, PHTQ…SDWD, SHTS…NDAG, QHSR…KRDE, and AHDQ…KMTE.

It belongs to the WD repeat CIA1 family.

Its function is as follows. Essential component of the cytosolic iron-sulfur (Fe/S) protein assembly machinery. Required for the maturation of extramitochondrial Fe/S proteins. The polypeptide is Probable cytosolic iron-sulfur protein assembly protein Ciao1 (Drosophila ananassae (Fruit fly)).